Here is a 224-residue protein sequence, read N- to C-terminus: UPF0758 protein Maqu_3564 (224 aa).

One can recognise an MPN domain in the interval 102–224 (PLRSPADTRR…VISLAERGLM (123 aa)). Zn(2+)-binding residues include His-173, His-175, and Asp-186. A JAMM motif motif is present at residues 173–186 (HNHPSGVAEPSQAD).

The protein belongs to the UPF0758 family.

The polypeptide is UPF0758 protein Maqu_3564 (Marinobacter nauticus (strain ATCC 700491 / DSM 11845 / VT8) (Marinobacter aquaeolei)).